Reading from the N-terminus, the 379-residue chain is Queuine tRNA-ribosyltransferase (379 aa).

The active-site Proton acceptor is Asp94. Residues 94 to 98 (DSGGF), Asp148, Gln191, and Gly218 each bind substrate. The tract at residues 249 to 255 (GVGSPDS) is RNA binding. The active-site Nucleophile is the Asp268. Positions 273–277 (TRIAR) are RNA binding; important for wobble base 34 recognition. 4 residues coordinate Zn(2+): Cys306, Cys308, Cys311, and His337.

It belongs to the queuine tRNA-ribosyltransferase family. Homodimer. Within each dimer, one monomer is responsible for RNA recognition and catalysis, while the other monomer binds to the replacement base PreQ1. Zn(2+) is required as a cofactor.

The enzyme catalyses 7-aminomethyl-7-carbaguanine + guanosine(34) in tRNA = 7-aminomethyl-7-carbaguanosine(34) in tRNA + guanine. It functions in the pathway tRNA modification; tRNA-queuosine biosynthesis. Functionally, catalyzes the base-exchange of a guanine (G) residue with the queuine precursor 7-aminomethyl-7-deazaguanine (PreQ1) at position 34 (anticodon wobble position) in tRNAs with GU(N) anticodons (tRNA-Asp, -Asn, -His and -Tyr). Catalysis occurs through a double-displacement mechanism. The nucleophile active site attacks the C1' of nucleotide 34 to detach the guanine base from the RNA, forming a covalent enzyme-RNA intermediate. The proton acceptor active site deprotonates the incoming PreQ1, allowing a nucleophilic attack on the C1' of the ribose to form the product. After dissociation, two additional enzymatic reactions on the tRNA convert PreQ1 to queuine (Q), resulting in the hypermodified nucleoside queuosine (7-(((4,5-cis-dihydroxy-2-cyclopenten-1-yl)amino)methyl)-7-deazaguanosine). The chain is Queuine tRNA-ribosyltransferase from Halalkalibacterium halodurans (strain ATCC BAA-125 / DSM 18197 / FERM 7344 / JCM 9153 / C-125) (Bacillus halodurans).